Here is a 308-residue protein sequence, read N- to C-terminus: HTH-type transcriptional activator AllS (308 aa).

One can recognise an HTH lysR-type domain in the interval 2 to 59; sequence FDPETLRTFISVAETGSFSKAAERLCKTTATISYRIKLLEENTGVGLFFRTTRSVSLT. The H-T-H motif DNA-binding region spans 19-38; it reads FSKAAERLCKTTATISYRIK.

This sequence belongs to the LysR transcriptional regulatory family.

In terms of biological role, positive regulator essential for the expression of allD operon. Binds to the allD promoter. In Salmonella paratyphi A (strain ATCC 9150 / SARB42), this protein is HTH-type transcriptional activator AllS (allS).